The sequence spans 438 residues: 26S proteasome regulatory subunit 6A (438 aa).

Residues 1 to 24 (MSTLEELDALDQSQQGGSSNNEGL) are disordered. Over residues 11-22 (DQSQQGGSSNNE) the composition is skewed to polar residues. 226-233 (GPPGTGKT) is an ATP binding site.

Belongs to the AAA ATPase family.

It is found in the cytoplasm. Its subcellular location is the nucleus. In terms of biological role, the 26S proteasome is involved in the ATP-dependent degradation of ubiquitinated proteins. The regulatory (or ATPase) complex confers ATP dependency and substrate specificity to the 26S complex. The polypeptide is 26S proteasome regulatory subunit 6A (tbp1) (Schizosaccharomyces pombe (strain 972 / ATCC 24843) (Fission yeast)).